Reading from the N-terminus, the 325-residue chain is Methionyl-tRNA formyltransferase (325 aa).

112-115 (SLLP) contacts (6S)-5,6,7,8-tetrahydrofolate.

Belongs to the Fmt family.

It catalyses the reaction L-methionyl-tRNA(fMet) + (6R)-10-formyltetrahydrofolate = N-formyl-L-methionyl-tRNA(fMet) + (6S)-5,6,7,8-tetrahydrofolate + H(+). Functionally, attaches a formyl group to the free amino group of methionyl-tRNA(fMet). The formyl group appears to play a dual role in the initiator identity of N-formylmethionyl-tRNA by promoting its recognition by IF2 and preventing the misappropriation of this tRNA by the elongation apparatus. The chain is Methionyl-tRNA formyltransferase from Roseiflexus sp. (strain RS-1).